Reading from the N-terminus, the 530-residue chain is Formate--tetrahydrofolate ligase (530 aa).

46-53 (TPEGEGKT) contacts ATP.

This sequence belongs to the formate--tetrahydrofolate ligase family.

It catalyses the reaction (6S)-5,6,7,8-tetrahydrofolate + formate + ATP = (6R)-10-formyltetrahydrofolate + ADP + phosphate. It functions in the pathway one-carbon metabolism; tetrahydrofolate interconversion. This chain is Formate--tetrahydrofolate ligase, found in Malacoplasma penetrans (strain HF-2) (Mycoplasma penetrans).